Reading from the N-terminus, the 560-residue chain is 2-succinylbenzoate--CoA ligase, chloroplastic/peroxisomal (560 aa).

A chloroplast-targeting transit peptide spans 1–15; the sequence is MANHSRPHICQCLTR. The next 3 helical transmembrane spans lie at 69-89, 189-209, and 225-245; these read LFLEWLLAVALVGGVVAPLNY, GVTISHLAFITQSLAKIAIAG, and IGGLSSAMAMLMVGACHVLLP. A Microbody targeting signal motif is present at residues 558 to 560; sequence SSL.

This sequence belongs to the ATP-dependent AMP-binding enzyme family. MenE subfamily. In terms of tissue distribution, high expression in young leaves and flowers. Not expressed in roots.

It localises to the plastid. The protein localises to the chloroplast membrane. It is found in the peroxisome membrane. The enzyme catalyses 2-succinylbenzoate + ATP + CoA = 2-succinylbenzoyl-CoA + AMP + diphosphate. Its function is as follows. Involved in the biosynthesis of phylloquinone (vitamin K1). Converts 2-succinylbenzoate (OSB) to 2-succinylbenzoyl-CoA (OSB-CoA). The chain is 2-succinylbenzoate--CoA ligase, chloroplastic/peroxisomal (AAE14) from Arabidopsis thaliana (Mouse-ear cress).